The chain runs to 426 residues: Serine--tRNA ligase (426 aa).

229–231 (TAE) is an L-serine binding site. 260–262 (RSE) contacts ATP. Glutamate 283 is a binding site for L-serine. 347–350 (EIAS) contacts ATP. Serine 383 provides a ligand contact to L-serine.

Belongs to the class-II aminoacyl-tRNA synthetase family. Type-1 seryl-tRNA synthetase subfamily. As to quaternary structure, homodimer. The tRNA molecule binds across the dimer.

The protein localises to the cytoplasm. It catalyses the reaction tRNA(Ser) + L-serine + ATP = L-seryl-tRNA(Ser) + AMP + diphosphate + H(+). The catalysed reaction is tRNA(Sec) + L-serine + ATP = L-seryl-tRNA(Sec) + AMP + diphosphate + H(+). Its pathway is aminoacyl-tRNA biosynthesis; selenocysteinyl-tRNA(Sec) biosynthesis; L-seryl-tRNA(Sec) from L-serine and tRNA(Sec): step 1/1. Functionally, catalyzes the attachment of serine to tRNA(Ser). Is also able to aminoacylate tRNA(Sec) with serine, to form the misacylated tRNA L-seryl-tRNA(Sec), which will be further converted into selenocysteinyl-tRNA(Sec). In Rickettsia bellii (strain RML369-C), this protein is Serine--tRNA ligase.